Here is a 26-residue protein sequence, read N- to C-terminus: Somatostatin-1 (26 aa).

Cysteines 15 and 26 form a disulfide.

Belongs to the somatostatin family.

The protein localises to the secreted. Its function is as follows. Somatostatin inhibits the release of somatotropin. In Amia calva (Bowfin), this protein is Somatostatin-1 (sst1).